The primary structure comprises 1048 residues: [F-actin]-monooxygenase MICAL1 (1048 aa).

The tract at residues Met-1–Glu-489 is monooxygenase domain. FAD contacts are provided by residues Cys-95, Glu-114–Arg-116, Arg-121–Asn-123, Phe-181, Tyr-293, and Asp-393. Thr-475 is subject to Phosphothreonine. Positions Lys-488–Lys-502 are enriched in basic and acidic residues. A disordered region spans residues Lys-488–Ala-508. Residues Ser-507–Lys-611 enclose the Calponin-homology (CH) domain. Ser-616 carries the post-translational modification Phosphoserine. The disordered stretch occupies residues Thr-643–Glu-676. Residues Thr-654–Pro-666 show a composition bias toward low complexity. One can recognise an LIM zinc-binding domain in the interval Glu-681–Lys-743. Cys-683, Cys-686, His-704, Cys-707, Cys-710, Cys-713, Cys-733, and His-736 together coordinate Zn(2+). 3 disordered regions span residues Asp-741–Arg-787, Ile-805–Ala-825, and Pro-839–Glu-873. Polar residues predominate over residues Asn-747–Gln-765. Residues Pro-772–Arg-787 are compositionally biased toward low complexity. Residues Ser-777 and Ser-781 each carry the phosphoserine modification. 3 coiled-coil regions span residues Glu-847–Glu-867, Glu-906–Ser-949, and Glu-974–Arg-1031. A compositionally biased stretch (acidic residues) spans Gly-852–Pro-868. A bMERB domain is found at Lys-905–Ala-1048.

It belongs to the Mical family. In terms of assembly, associates with the SH3 domain of NEDD9. Interacts with VIM and PLXNA3. Interacts with RAB1B, RAB8A, RAB10, RAB13 and RAB15 (in their GTP-bound forms); binding to RAB1B is of low affinity compared to other Rab proteins; at least in case of RAB8A and RAB10 can bind 2 molecules of the Rab proteins simultaneously. Interacts with STK38 and STK38L. Interacts with GRAF1/ARHGAP26, GRAF2/ARHGAP10, RAB8A, RAB8B and RAB10; may bind simultaneously to GRAFs and Rabs and connects GRAFs to Rabs. Does not interact with RAB1 and RAB11A. The cofactor is FAD. As to expression, expressed in the postnatal and adult hippocampus; found in dentate gyrus, the polymorphic layer, cornu ammonis (CA) 1-3 and in mossy fibers of the striatum lucidum. In adult hippocampus strongly expressed in CA3 pyramidial neurons.

Its subcellular location is the cytoplasm. The protein resides in the cytoskeleton. It is found in the endosome membrane. It localises to the midbody. The catalysed reaction is L-methionyl-[F-actin] + NADPH + O2 + H(+) = L-methionyl-(R)-S-oxide-[F-actin] + NADP(+) + H2O. The enzyme catalyses NADPH + O2 + H(+) = H2O2 + NADP(+). Functionally, monooxygenase that promotes depolymerization of F-actin by mediating oxidation of specific methionine residues on actin to form methionine-sulfoxide, resulting in actin filament disassembly and preventing repolymerization. In the absence of actin, it also functions as a NADPH oxidase producing H(2)O(2). Acts as a cytoskeletal regulator that connects NEDD9 to intermediate filaments. Also acts as a negative regulator of apoptosis via its interaction with STK38 and STK38L; acts by antagonizing STK38 and STK38L activation by MST1/STK4. Involved in regulation of lamina-specific connectivity in the nervous system such as the development of lamina-restricted hippocampal connections. Through redox regulation of the actin cytoskeleton controls the intracellular distribution of secretory vesicles containing L1/neurofascin/NgCAM family proteins in neurons, thereby regulating their cell surface levels. May act as Rab effector protein and play a role in vesicle trafficking. Promotes endosomal tubule extension by associating with RAB8 (RAB8A or RAB8B), RAB10 and GRAF (GRAF1/ARHGAP26 or GRAF2/ARHGAP10) on the endosomal membrane which may connect GRAFs to Rabs, thereby participating in neosynthesized Rab8-Rab10-Rab11-dependent protein export. The protein is [F-actin]-monooxygenase MICAL1 (Mical1) of Mus musculus (Mouse).